Here is a 37-residue protein sequence, read N- to C-terminus: Large ribosomal subunit protein bL36 (37 aa).

It belongs to the bacterial ribosomal protein bL36 family.

This chain is Large ribosomal subunit protein bL36, found in Leptothrix cholodnii (strain ATCC 51168 / LMG 8142 / SP-6) (Leptothrix discophora (strain SP-6)).